A 192-amino-acid polypeptide reads, in one-letter code: Imidazoleglycerol-phosphate dehydratase (192 aa).

The protein belongs to the imidazoleglycerol-phosphate dehydratase family.

It localises to the cytoplasm. It carries out the reaction D-erythro-1-(imidazol-4-yl)glycerol 3-phosphate = 3-(imidazol-4-yl)-2-oxopropyl phosphate + H2O. The protein operates within amino-acid biosynthesis; L-histidine biosynthesis; L-histidine from 5-phospho-alpha-D-ribose 1-diphosphate: step 6/9. The protein is Imidazoleglycerol-phosphate dehydratase of Staphylococcus epidermidis (strain ATCC 35984 / DSM 28319 / BCRC 17069 / CCUG 31568 / BM 3577 / RP62A).